A 406-amino-acid polypeptide reads, in one-letter code: ATPase ASNA1 homolog (406 aa).

Lysine 21–threonine 28 provides a ligand contact to ATP. The active site involves aspartate 62. Residues glutamate 300 and asparagine 327 each contribute to the ATP site. Zn(2+) contacts are provided by cysteine 339 and cysteine 342.

The protein belongs to the arsA ATPase family. As to quaternary structure, homodimer.

The protein resides in the cytoplasm. It localises to the endoplasmic reticulum. In terms of biological role, ATPase required for the post-translational delivery of tail-anchored (TA) proteins to the endoplasmic reticulum. Recognizes and selectively binds the transmembrane domain of TA proteins in the cytosol. This complex then targets to the endoplasmic reticulum by membrane-bound receptors, where the tail-anchored protein is released for insertion. This process is regulated by ATP binding and hydrolysis. ATP binding drives the homodimer towards the closed dimer state, facilitating recognition of newly synthesized TA membrane proteins. ATP hydrolysis is required for insertion. Subsequently, the homodimer reverts towards the open dimer state, lowering its affinity for the membrane-bound receptor, and returning it to the cytosol to initiate a new round of targeting. The sequence is that of ATPase ASNA1 homolog from Leishmania braziliensis.